The primary structure comprises 357 residues: MNESYRCQAATWVERGSSATMGGVLFSAGLLGNLLALVLLARSGLGSCRPGPLHPPPSVFYVLVCGLTVTHLLGKCLISPMVLAAYAQNRSLKELLPASGNQLCEAFAFLMSFFGLASTLQLLAMALECWLSLGHPFFYQRHITARRGVLVAPVAGAFSLAFCALPFAGFGKFVQYCPGTWCFIQMIHKKRSFSVIGFSVLYSSLMALLVLATVVCNLGAMSNLYAMHRRQRHHPRRCSRDRAQSGSDYRHGSPNPLEELDHFVLLALTTVLFTMCSLPLIYRAYYGAFKLVDRADGDSEDLQALRFLSVISIVDPWIFIIFRTSVFRMLFHKAFTRPLIYRNWCSHSWQTNMESTL.

Residues 1 to 20 (MNESYRCQAATWVERGSSAT) are Extracellular-facing. The N-linked (GlcNAc...) asparagine glycan is linked to Asn2. Residues 21–41 (MGGVLFSAGLLGNLLALVLLA) traverse the membrane as a helical segment. Topologically, residues 42-57 (RSGLGSCRPGPLHPPP) are cytoplasmic. Residues 58–78 (SVFYVLVCGLTVTHLLGKCLI) form a helical membrane-spanning segment. The Extracellular portion of the chain corresponds to 79–106 (SPMVLAAYAQNRSLKELLPASGNQLCEA). An N-linked (GlcNAc...) asparagine glycan is attached at Asn89. A disulfide bridge links Cys104 with Cys182. A helical membrane pass occupies residues 107–127 (FAFLMSFFGLASTLQLLAMAL). At 128–149 (ECWLSLGHPFFYQRHITARRGV) the chain is on the cytoplasmic side. A helical membrane pass occupies residues 150–170 (LVAPVAGAFSLAFCALPFAGF). Topologically, residues 171-194 (GKFVQYCPGTWCFIQMIHKKRSFS) are extracellular. A helical transmembrane segment spans residues 195–215 (VIGFSVLYSSLMALLVLATVV). Topologically, residues 216–261 (CNLGAMSNLYAMHRRQRHHPRRCSRDRAQSGSDYRHGSPNPLEELD) are cytoplasmic. Residues 262–282 (HFVLLALTTVLFTMCSLPLIY) traverse the membrane as a helical segment. Residues 283–306 (RAYYGAFKLVDRADGDSEDLQALR) are Extracellular-facing. The helical transmembrane segment at 307-327 (FLSVISIVDPWIFIIFRTSVF) threads the bilayer. Residues 328–357 (RMLFHKAFTRPLIYRNWCSHSWQTNMESTL) lie on the Cytoplasmic side of the membrane.

Belongs to the G-protein coupled receptor 1 family. In terms of tissue distribution, strongly expressed in eye and gastrointestinal tract (GIT), moderately in the brain and oviduct and weakly in the epididymis. In the eye, expressed in the epithelium of the iris and ciliary body and in photoreceptor cells of the retina. In the brain, expressed in leptomeninges, choroid plexus and spinal cord (sensory and motor neurons of the dorsal and ventral horns). In the stomach, expressed in the mucous-secreting goblet cells and the columnar epithelium. Expressed in platelets.

Its subcellular location is the cell membrane. In terms of biological role, receptor for prostaglandin D2 (PGD2). The activity of this receptor is mainly mediated by G(s) proteins that stimulate adenylate cyclase, resulting in an elevation of intracellular cAMP. A mobilization of calcium is also observed, but without formation of inositol 1,4,5-trisphosphate. The chain is Prostaglandin D2 receptor-like (Ptgdrl) from Rattus norvegicus (Rat).